The sequence spans 571 residues: RNA polymerase sigma factor SigA (571 aa).

A sigma-70 factor domain-2 region spans residues 321 to 391 (MVESNLRLVI…TRAIADQART (71 aa)). An Interaction with polymerase core subunit RpoC motif is present at residues 345-348 (DLIQ). Residues 400–476 (ETINKVLRGA…DTAVESPAEA (77 aa)) are sigma-70 factor domain-3. Positions 489–542 (VLKTLTDRERFVLIHRFGLLDGRPKTLEEVGSAFNVTRERIRQIEAKALRKMRH) are sigma-70 factor domain-4. The H-T-H motif DNA-binding region spans 515–534 (LEEVGSAFNVTRERIRQIEA).

Belongs to the sigma-70 factor family. RpoD/SigA subfamily. In terms of assembly, interacts transiently with the RNA polymerase catalytic core.

Its subcellular location is the cytoplasm. Its function is as follows. Sigma factors are initiation factors that promote the attachment of RNA polymerase to specific initiation sites and are then released. This sigma factor is the primary sigma factor during exponential growth. This is RNA polymerase sigma factor SigA from Chlamydia muridarum (strain MoPn / Nigg).